Consider the following 194-residue polypeptide: 22 kDa relaxation protein (194 aa).

In terms of biological role, this protein is probably required for relaxation complex formation. This is 22 kDa relaxation protein from Salmonella typhimurium.